The sequence spans 140 residues: Odorant-binding protein 10 (140 aa).

Positions methionine 1 to serine 25 are cleaved as a signal peptide.

This sequence belongs to the PBP/GOBP family. As to expression, high-level expression in female mouth parts, particularly in the proboscis (at protein level). Low-level expression in female antenna (at protein level). Female salivary gland. Female chemosensory organs: antenna, palp and proboscis. Male antenna, wing and maxillary palp. Expressed at higher levels in male tissues compared to female tissues. Not detected in midgut.

The protein resides in the secreted. In terms of biological role, involved in modulation of blood-feeding behavior and capacity in female mosquitoes. Required for normal oviposition. Required for normal fecundity and fertility of female mosquitoes. Required for normal expression of VGA1 gene, which encodes the egg yolk protein vitellogenin-A1. Required for normal female longevity when mosquitoes are maintained on regular sugar meal. (Microbial infection) Facilitates shedding of dengue virus type 2 particles into mosquito saliva. Does not affect dengue virus type 2 replication or infection prevalence in midgut and salivary glands at 14 days after blood feeding. Functionally, (Microbial infection) Facilitates shedding of Zika virus particles into mosquito saliva. Does not affect Zika virus replication or infection prevalence in midgut and salivary glands at 14 days after blood feeding. This is Odorant-binding protein 10 from Aedes aegypti (Yellowfever mosquito).